Reading from the N-terminus, the 159-residue chain is Large ribosomal subunit protein uL10 (159 aa).

Belongs to the universal ribosomal protein uL10 family. In terms of assembly, part of the ribosomal stalk of the 50S ribosomal subunit. The N-terminus interacts with L11 and the large rRNA to form the base of the stalk. The C-terminus forms an elongated spine to which L12 dimers bind in a sequential fashion forming a multimeric L10(L12)X complex.

Forms part of the ribosomal stalk, playing a central role in the interaction of the ribosome with GTP-bound translation factors. In Campylobacter jejuni subsp. jejuni serotype O:6 (strain 81116 / NCTC 11828), this protein is Large ribosomal subunit protein uL10.